Consider the following 303-residue polypeptide: Sulfate adenylyltransferase subunit 2 (303 aa).

The protein belongs to the PAPS reductase family. CysD subfamily. In terms of assembly, heterodimer composed of CysD, the smaller subunit, and CysN.

It catalyses the reaction sulfate + ATP + H(+) = adenosine 5'-phosphosulfate + diphosphate. Its pathway is sulfur metabolism; hydrogen sulfide biosynthesis; sulfite from sulfate: step 1/3. Its function is as follows. With CysN forms the ATP sulfurylase (ATPS) that catalyzes the adenylation of sulfate producing adenosine 5'-phosphosulfate (APS) and diphosphate, the first enzymatic step in sulfur assimilation pathway. APS synthesis involves the formation of a high-energy phosphoric-sulfuric acid anhydride bond driven by GTP hydrolysis by CysN coupled to ATP hydrolysis by CysD. This Sulfurovum sp. (strain NBC37-1) protein is Sulfate adenylyltransferase subunit 2.